We begin with the raw amino-acid sequence, 486 residues long: Argininosuccinate lyase (486 aa).

Belongs to the lyase 1 family. Argininosuccinate lyase subfamily.

Its subcellular location is the cytoplasm. It carries out the reaction 2-(N(omega)-L-arginino)succinate = fumarate + L-arginine. Its pathway is amino-acid biosynthesis; L-arginine biosynthesis; L-arginine from L-ornithine and carbamoyl phosphate: step 3/3. The chain is Argininosuccinate lyase from Acidobacterium capsulatum (strain ATCC 51196 / DSM 11244 / BCRC 80197 / JCM 7670 / NBRC 15755 / NCIMB 13165 / 161).